A 157-amino-acid chain; its full sequence is Endoribonuclease YbeY (157 aa).

Zn(2+)-binding residues include histidine 118, histidine 122, and histidine 128.

It belongs to the endoribonuclease YbeY family. It depends on Zn(2+) as a cofactor.

The protein localises to the cytoplasm. In terms of biological role, single strand-specific metallo-endoribonuclease involved in late-stage 70S ribosome quality control and in maturation of the 3' terminus of the 16S rRNA. The sequence is that of Endoribonuclease YbeY from Bordetella parapertussis (strain 12822 / ATCC BAA-587 / NCTC 13253).